The sequence spans 618 residues: Auxin efflux carrier component 3a (618 aa).

Residues 1-6 (MISGHD) are Extracellular-facing. Residues 7 to 27 (FYTVMAAVVPLYVAMFLAYGS) form a helical membrane-spanning segment. The Cytoplasmic segment spans residues 28–38 (VRWWGIFTPDQ). Residues 39–59 (CSGINRFVAIFAVPLLSFHFI) form a helical membrane-spanning segment. Val-51 is a (indol-3-yl)acetate binding site. The Extracellular portion of the chain corresponds to 60–70 (STNDPYAMNLR). A helical membrane pass occupies residues 71–90 (FLAADTLQKLLVLAGLAAWS). At 91–104 (RLPSRTGAPRLDWS) the chain is on the cytoplasmic side. The helical transmembrane segment at 105-125 (ITLFSLSTLPNTLVMGIPLLI) threads the bilayer. The (indol-3-yl)acetate site is built by Asn-115 and Leu-117. Over 126-134 (AMYGPYSGS) the chain is Extracellular. Residues 135-155 (LMVQIVVLQCIIWYTLMLFLF) form a helical membrane-spanning segment. Tyr-148 contacts (indol-3-yl)acetate. Residues 156–478 (EFRAARMLIA…LIRNPNTYSS (323 aa)) lie on the Cytoplasmic side of the membrane. Over residues 281–293 (SLQSSRGPTPRQS) the composition is skewed to polar residues. Positions 281 to 312 (SLQSSRGPTPRQSNFDEHSARPPKPPATTTGA) are disordered. The helical transmembrane segment at 479–499 (LLGLAWSLVAFRWHVSMPAIV) threads the bilayer. Over 500-502 (EKS) the chain is Extracellular. A helical membrane pass occupies residues 503–523 (ISILSDAGLGMAMFSLGLFMA). Topologically, residues 524–539 (LQPSIIACGKSAAVVS) are cytoplasmic. A helical membrane pass occupies residues 540–560 (MAVRFLAGPAVMAAASIAIGL). The Extracellular segment spans residues 561–563 (RGT). A helical transmembrane segment spans residues 564–584 (LLHVAIVQAALPQGIVPFVFA). Positions 578 and 579 each coordinate (indol-3-yl)acetate. Residues 585–597 (KEYNVHPAILSTA) lie on the Cytoplasmic side of the membrane. Residues 598 to 618 (VIFGMLIALPITLLYYILLGL) traverse the membrane as a helical segment.

Belongs to the auxin efflux carrier (TC 2.A.69.1) family. Homodimer. Expressed in coleoptiles, roots, vascular bundles of leaves, shoots, lamina joints and vascular bundles of the lemma and filament. Expressed in stem bases, stems, leaves and young panicles.

It localises to the cell membrane. Its function is as follows. Acts as a component of the auxin efflux carrier. Involved in the polar auxin transport which may regulate crown root development and response to water stress. In Oryza sativa subsp. japonica (Rice), this protein is Auxin efflux carrier component 3a.